A 128-amino-acid polypeptide reads, in one-letter code: Glycine cleavage system H protein (128 aa).

The Lipoyl-binding domain occupies 22-104 (TALVGVTDYA…YASGWLVKIK (83 aa)). K63 bears the N6-lipoyllysine mark.

The protein belongs to the GcvH family. The glycine cleavage system is composed of four proteins: P, T, L and H. It depends on (R)-lipoate as a cofactor.

The glycine cleavage system catalyzes the degradation of glycine. The H protein shuttles the methylamine group of glycine from the P protein to the T protein. This Halothermothrix orenii (strain H 168 / OCM 544 / DSM 9562) protein is Glycine cleavage system H protein.